The following is a 2506-amino-acid chain: Zinc finger protein 462 (2506 aa).

C2H2-type zinc fingers lie at residues 4–27 (LQCDGCDFRAPSYEDLKAHIQDVH), 108–131 (FQCKFCVRYFRSKNLLIEHTRKVH), and 162–185 (FSCQFCTYKSPRRARIIKHQKMYH). Lysine 20 participates in a covalent cross-link: Glycyl lysine isopeptide (Lys-Gly) (interchain with G-Cter in SUMO1); alternate. Lysine 20 participates in a covalent cross-link: Glycyl lysine isopeptide (Lys-Gly) (interchain with G-Cter in SUMO2); alternate. The interaction with PBX1 stretch occupies residues 215–241 (PCKELPAEVVERSILESMVKPLTKSRG). Residues lysine 234 and lysine 271 each participate in a glycyl lysine isopeptide (Lys-Gly) (interchain with G-Cter in SUMO2) cross-link. Residues 280–299 (QEGTNLPDVPNKSAPSPTSN) form a disordered region. O-linked (GlcNAc6P) serine glycosylation is found at serine 292 and serine 309. Glycyl lysine isopeptide (Lys-Gly) (interchain with G-Cter in SUMO2) cross-links involve residues lysine 337, lysine 347, and lysine 349. A disordered region spans residues 337-356 (KFSPMSYPQMKPKSPHNSGL). A phosphoserine mark is found at serine 350 and serine 354. Lysine 428 participates in a covalent cross-link: Glycyl lysine isopeptide (Lys-Gly) (interchain with G-Cter in SUMO2). C2H2-type zinc fingers lie at residues 439–462 (FQCPFCPFLTMHRRSISRHIENIH) and 470–492 (YKCDECPFTCKSSLKLGAHKQCH). Residue lysine 484 forms a Glycyl lysine isopeptide (Lys-Gly) (interchain with G-Cter in SUMO2) linkage. The interval 535–596 (DPLQQQQPPQ…QPQPPTQAAP (62 aa)) is disordered. Over residues 542 to 593 (PPQPPPPPPPPPPSQPQPLQQPQPPQLQPPHQVPPQPQTQPPPTQQPQPPTQ) the composition is skewed to pro residues. The C2H2-type 6 zinc finger occupies 600–623 (YKCTMCNYSTTTLKGLRVHQQHKH). Residues lysine 631, lysine 657, and lysine 668 each participate in a glycyl lysine isopeptide (Lys-Gly) (interchain with G-Cter in SUMO2) cross-link. Positions 636–661 (PSSLPLENETDSHPSSSNTVKKSQTS) are disordered. Polar residues predominate over residues 648 to 661 (HPSSSNTVKKSQTS). Serine 688 carries the phosphoserine modification. Residues lysine 706 and aspartate 849 each participate in a glycyl lysine isopeptide (Lys-Gly) (interchain with G-Cter in SUMO2) cross-link. 3 C2H2-type zinc fingers span residues 843–866 (YYCKHCDFNNKSARSVSTHYQRMH), 886–908 (YRCLECYIDYTNFEDLQQHYGEH), and 925–948 (YRCRFCSYTSPNVRSLMPHYQRMH). Lysine 986 participates in a covalent cross-link: Glycyl lysine isopeptide (Lys-Gly) (interchain with G-Cter in SUMO2). The C2H2-type 10 zinc finger occupies 1030 to 1053 (YDCDVCSFASPNMHSVLVHYQKKH). Serine 1090 is modified (phosphoserine). Residue lysine 1135 forms a Glycyl lysine isopeptide (Lys-Gly) (interchain with G-Cter in SUMO2) linkage. The tract at residues 1157–1186 (MRGVEGPQGSPRPPAPIQQLNRSSSERDGP) is disordered. A Phosphoserine modification is found at serine 1166. Residues lysine 1206, lysine 1214, lysine 1220, and lysine 1243 each participate in a glycyl lysine isopeptide (Lys-Gly) (interchain with G-Cter in SUMO2) cross-link. 2 C2H2-type zinc fingers span residues 1265 to 1288 (LKCRQCSYTSPYFYALRKHIKKDH) and 1470 to 1493 (YQCTVCQSEYNNLHGLLTHYGKKH). Lysine 1499 is covalently cross-linked (Glycyl lysine isopeptide (Lys-Gly) (interchain with G-Cter in SUMO2)). The segment at 1515-1538 (YKCRHCPYINTRIHGVLTHYQKRH) adopts a C2H2-type 13 zinc-finger fold. Residues lysine 1571 and lysine 1591 each participate in a glycyl lysine isopeptide (Lys-Gly) (interchain with G-Cter in SUMO2) cross-link. 3 consecutive C2H2-type zinc fingers follow at residues 1577 to 1600 (YRCKLCPYTHGTLEKLKIHYEKYH), 1660 to 1683 (FRCQLCKYFCSTRKGIARHYRIKH), and 1697 to 1720 (FKCALCAYTNPIRKGLAAHYQKRH). Residues lysine 1698 and lysine 1780 each participate in a glycyl lysine isopeptide (Lys-Gly) (interchain with G-Cter in SUMO2) cross-link. The C2H2-type 17 zinc-finger motif lies at 1892–1914 (YQCKHCDSKLQSTAELTSHLNIH). Residue lysine 1946 forms a Glycyl lysine isopeptide (Lys-Gly) (interchain with G-Cter in SUMO2) linkage. A C2H2-type 18; degenerate zinc finger spans residues 1968–1992 (YKCKFCVEVHPTLRAICNHLRKHVQ). Lysine 2004 bears the N6-methyllysine mark. 3 consecutive C2H2-type zinc fingers follow at residues 2025–2048 (YSCQYCSFVSAFRHNLDRHMQTHH), 2054–2077 (FRCKLCSFKSSYNSRLKTHILKAH), and 2083–2106 (YKCSWCSFSTMTISQLKEHSLKVH). Lysine 2104 participates in a covalent cross-link: Glycyl lysine isopeptide (Lys-Gly) (interchain with G-Cter in SUMO2). The segment at 2122 to 2152 (SSHSHHSSQKATPAEEVEDSNDSSYSEPPDV) is disordered. The segment covering 2143–2152 (DSSYSEPPDV) has biased composition (polar residues). Serine 2172 and serine 2177 each carry phosphoserine. C2H2-type zinc fingers lie at residues 2191 to 2214 (LHCEFCEFSSGYIQSIRRHYRDKH), 2220 to 2243 (FKCKDCSFYTGFKSAFTMHVEAGH), and 2254 to 2276 (LRCPLCLYHTKYKRNMIDHIVLH). Lysine 2293 is covalently cross-linked (Glycyl lysine isopeptide (Lys-Gly) (interchain with G-Cter in SUMO2)). C2H2-type zinc fingers lie at residues 2300 to 2322 (FRCDKCTFTCSSDESLQQHIEKH) and 2328 to 2351 (YKCQLCYYETKHTEELDSHLRDEH). Residues 2371–2396 (MKEKMESSSSDDEDKEEEMNSKAEDR) form a disordered region. The segment at 2414 to 2436 (FPCEFCGRAFSQGSEWERHVLRH) adopts a C2H2-type 27 zinc-finger fold. Glycyl lysine isopeptide (Lys-Gly) (interchain with G-Cter in SUMO2) cross-links involve residues lysine 2444 and lysine 2504.

Interacts with PBX1; this interaction prevents PBX1-HOXA9 heterodimer from forming and binding to DNA. Post-translationally, O-GlcNAcylated with O-GlcNAc-6-phosphate.

The protein localises to the nucleus. Functionally, zinc finger nuclear factor involved in transcription by regulating chromatin structure and organization. Involved in the pluripotency and differentiation of embryonic stem cells by regulating SOX2, POU5F1/OCT4, and NANOG. By binding PBX1, prevents the heterodimerization of PBX1 and HOXA9 and their binding to DNA. Regulates neuronal development and neural cell differentiation. The chain is Zinc finger protein 462 from Homo sapiens (Human).